The sequence spans 94 residues: LSM2-LSM8 complex subunit lsm8 (94 aa).

The region spanning 1–74 is the Sm domain; that stretch reads MSLADFMEQR…VAMVGLVNEE (74 aa).

Belongs to the snRNP Sm proteins family. Component of the heptameric LSM2-LSM8 complex that forms a seven-membered ring structure with a donut shape. The LSm subunits are arranged in the order lsm8, lsm2, lsm3, lsm6, lsm5, lsm7 and lsm4.

The protein resides in the nucleus. The protein localises to the cytoplasm. In terms of biological role, component of the nuclear LSM2-LSM8 complex, which is involved in spliceosome assembly. The LSM2-LSM8 complex plays a role in the biogenesis of the spliceosomal U4/U6-U5 tri-snRNP complex by accelerating prp24-mediated annealing of U4/U6 di-snRNA. The LSM2-LSM8 complex binds U6 snRNA terminating with a cyclic 2',3' phosphate group; RNA with an unmodified 3' hydroxyl or non-cyclic 3' phosphate is bound less tightly. The protein is LSM2-LSM8 complex subunit lsm8 (lsm8) of Schizosaccharomyces pombe (strain 972 / ATCC 24843) (Fission yeast).